Here is a 761-residue protein sequence, read N- to C-terminus: Pleckstrin homology domain-containing family M member 3 (761 aa).

Residue Ser132 is modified to Phosphoserine. 2 consecutive PH domains span residues 211 to 308 (NILK…EVVH) and 361 to 456 (NILK…IAAN). The segment at 669 to 722 (SHVYSCSLCSQKGFICEICNNGEILYPFEDISTSRCESCGAVFHSECKEKSVPC) adopts a Phorbol-ester/DAG-type zinc-finger fold.

Interacts with AKT1.

It localises to the cytoplasm. The protein localises to the golgi apparatus. It is found in the cell membrane. Involved in skeletal muscle differentiation. May act as a scaffold protein for AKT1 during muscle differentiation. The polypeptide is Pleckstrin homology domain-containing family M member 3 (Homo sapiens (Human)).